Reading from the N-terminus, the 336-residue chain is Homoserine O-acetyltransferase (336 aa).

The 264-residue stretch at 58 to 321 (AILVLHALTG…PHGHDAFLID (264 aa)) folds into the AB hydrolase-1 domain. The Nucleophile role is filled by Ser-147. Arg-204 contributes to the substrate binding site. Residues Asp-286 and His-315 contribute to the active site. Asp-316 serves as a coordination point for substrate.

It belongs to the AB hydrolase superfamily. MetX family. As to quaternary structure, homodimer.

The protein resides in the cytoplasm. It catalyses the reaction L-homoserine + acetyl-CoA = O-acetyl-L-homoserine + CoA. It functions in the pathway amino-acid biosynthesis; L-methionine biosynthesis via de novo pathway; O-acetyl-L-homoserine from L-homoserine: step 1/1. Its function is as follows. Transfers an acetyl group from acetyl-CoA to L-homoserine, forming acetyl-L-homoserine. This chain is Homoserine O-acetyltransferase, found in Deinococcus geothermalis (strain DSM 11300 / CIP 105573 / AG-3a).